Reading from the N-terminus, the 174-residue chain is Adenine phosphoribosyltransferase (174 aa).

It belongs to the purine/pyrimidine phosphoribosyltransferase family. As to quaternary structure, homodimer.

It localises to the cytoplasm. It catalyses the reaction AMP + diphosphate = 5-phospho-alpha-D-ribose 1-diphosphate + adenine. Its pathway is purine metabolism; AMP biosynthesis via salvage pathway; AMP from adenine: step 1/1. In terms of biological role, catalyzes a salvage reaction resulting in the formation of AMP, that is energically less costly than de novo synthesis. The polypeptide is Adenine phosphoribosyltransferase (Lachnoclostridium phytofermentans (strain ATCC 700394 / DSM 18823 / ISDg) (Clostridium phytofermentans)).